The following is a 585-amino-acid chain: DNA mismatch repair protein MutL (585 aa).

Belongs to the DNA mismatch repair MutL/HexB family.

This protein is involved in the repair of mismatches in DNA. It is required for dam-dependent methyl-directed DNA mismatch repair. May act as a 'molecular matchmaker', a protein that promotes the formation of a stable complex between two or more DNA-binding proteins in an ATP-dependent manner without itself being part of a final effector complex. This chain is DNA mismatch repair protein MutL, found in Methanoculleus marisnigri (strain ATCC 35101 / DSM 1498 / JR1).